The primary structure comprises 256 residues: 5-oxoprolinase subunit A (256 aa).

It belongs to the LamB/PxpA family. Forms a complex composed of PxpA, PxpB and PxpC.

It catalyses the reaction 5-oxo-L-proline + ATP + 2 H2O = L-glutamate + ADP + phosphate + H(+). Catalyzes the cleavage of 5-oxoproline to form L-glutamate coupled to the hydrolysis of ATP to ADP and inorganic phosphate. The sequence is that of 5-oxoprolinase subunit A from Cutibacterium acnes (strain DSM 16379 / KPA171202) (Propionibacterium acnes).